A 397-amino-acid chain; its full sequence is Pyruvate dehydrogenase E1 component subunit alpha, mitochondrial (397 aa).

Positions 98, 124, 125, 173, 175, 204, 205, 206, 233, and 235 each coordinate pyruvate. Residues Tyr124, Arg125, Gly173, Val175, Asp204, Gly205, Ala206, and Asn233 each coordinate thiamine diphosphate. Position 204 (Asp204) interacts with Mg(2+). The Mg(2+) site is built by Asn233 and Tyr235. His299 contributes to the thiamine diphosphate binding site.

As to quaternary structure, tetramer of 2 alpha and 2 beta subunits. It depends on thiamine diphosphate as a cofactor. Requires Mg(2+) as cofactor.

The protein localises to the mitochondrion matrix. It carries out the reaction N(6)-[(R)-lipoyl]-L-lysyl-[protein] + pyruvate + H(+) = N(6)-[(R)-S(8)-acetyldihydrolipoyl]-L-lysyl-[protein] + CO2. E1 activity is regulated by phosphorylation (inactivation) and dephosphorylation (activation) of the alpha subunit. In terms of biological role, the pyruvate dehydrogenase complex catalyzes the overall conversion of pyruvate to acetyl-CoA and CO(2). It contains multiple copies of three enzymatic components: pyruvate dehydrogenase (E1), dihydrolipoamide acetyltransferase (E2) and lipoamide dehydrogenase (E3). This Pisum sativum (Garden pea) protein is Pyruvate dehydrogenase E1 component subunit alpha, mitochondrial.